The sequence spans 46 residues: Mu-segestritoxin-Sf1g (46 aa).

Disulfide bonds link C3–C19, C10–C22, C18–C42, and C24–C40. The segment at 31–33 (RPW) is keys region for toxin activity.

It belongs to the neurotoxin 16 (SFI) family. In terms of tissue distribution, expressed by the venom gland.

The protein localises to the secreted. Functionally, insecticidal toxin. It inhibits insect voltage-gated sodium channels (Nav) by partially blocking the channel pore in DUM neurons from the American cockroach, not by acting as a gating modifier. The inhibition is only partially reversible after prolonged washout. In vivo, the toxin causes flaccid paralysis followed by death when injected into Heliothis virescens larvae. It also causes uncoordinated movements followed by full paralysis to sheep blowflies (Lucilia cuprina). When the toxin is fused to snowdrop lectin, it is orally active against larvae of the tomato moth (Laconobia oleracea), the rice brown planthopper (Nilaparvata lugens), and the peach-potato aphid (Myzus persicae). The chain is Mu-segestritoxin-Sf1g from Segestria florentina (Tube-web spider).